The primary structure comprises 462 residues: Elongation factor 1-alpha 1 (462 aa).

Gly2 is modified (n,N,N-trimethylglycine). The tr-type G domain maps to 5–242; the sequence is KTHINIVVIG…DCILPPTRPT (238 aa). Residues 14–21 are G1; sequence GHVDSGKS. 14 to 21 provides a ligand contact to GTP; it reads GHVDSGKS. Lys36 is modified (N6,N6,N6-trimethyllysine; alternate). At Lys36 the chain carries N6,N6-dimethyllysine; alternate. At Lys36 the chain carries N6-methyllysine; alternate. Lys55 carries the N6,N6-dimethyllysine modification. Positions 70–74 are G2; the sequence is GITID. Position 79 is an N6,N6,N6-trimethyllysine; by EEF1AKMT1 (Lys79). Positions 91–94 are G3; that stretch reads DAPG. Residue 153–156 coordinates GTP; sequence NKMD. Residues 153–156 form a G4 region; it reads NKMD. Position 165 is an N6,N6,N6-trimethyllysine; alternate; by EEF1AKMT3 (Lys165). N6,N6-dimethyllysine; alternate; by EEF1AKMT3 is present on Lys165. N6-acetyllysine; alternate is present on Lys165. The residue at position 165 (Lys165) is an N6-methyllysine; alternate; by EEF1AKMT3. Lys172 carries the post-translational modification N6-acetyllysine. 194–196 is a GTP binding site; the sequence is SGW. A G5 region spans residues 194-196; sequence SGW. Lys273 is modified (N6-acetyllysine). A Phosphoserine; by TGFBR1 modification is found at Ser300. Residue Glu301 is modified to 5-glutamyl glycerylphosphorylethanolamine. Lys318 is subject to N6,N6,N6-trimethyllysine; by EEF1AKMT2. Glu374 is subject to 5-glutamyl glycerylphosphorylethanolamine. Lys385 is covalently cross-linked (Glycyl lysine isopeptide (Lys-Gly) (interchain with G-Cter in ubiquitin)). Lys392 carries the post-translational modification N6-acetyllysine; alternate. Lys392 bears the N6-succinyllysine; alternate mark. Thr432 carries the phosphothreonine; by PASK modification. Lys439 carries the N6-acetyllysine modification.

It belongs to the TRAFAC class translation factor GTPase superfamily. Classic translation factor GTPase family. EF-Tu/EF-1A subfamily. As to quaternary structure, found in a nuclear export complex with XPO5, EEF1A1, Ran and aminoacylated tRNA. Interacts with PARP1 and TXK. Interacts with KARS1. May interact with ERGIC2. Interacts with IFIT1 (via TPR repeats 4-7). Interacts with DLC1, facilitating distribution to the membrane periphery and ruffles upon growth factor stimulation. Interacts with ZPR1; the interaction occurs in a epidermal growth factor (EGF)-dependent manner. Interacts with PPP1R16B. Interacts with SPHK1 and SPHK2; both interactions increase SPHK1 and SPHK2 kinase activity. Interacts with guanyl-nucleotide exchange factor EEF1B2. Interacts (via middle-region) with HTATIP2 (via N-terminus); the interaction is direct and competes with EEF1A1 binding to guanyl-nucleotide exchange factor EEF1B2, thereby inhibiting GDP for GTP exchange and reactivation of EEF1A1. Interacts with tRNA. Post-translationally, ISGylated. Phosphorylated by TXK. Phosphorylation by PASK increases translation efficiency. Phosphorylated by ROCK2. Phosphorylation by TGFBR1 inhibits translation elongation. In terms of processing, trimethylated at Lys-79 by EEF1AKMT1. Methylated at Lys-165 by EEF1AKMT3, methylation by EEF1AKMT3 is dynamic as well as inducible by stress conditions, such as ER-stress, and plays a regulatory role on mRNA translation. Trimethylated at Lys-318 by EEF1AKMT2. Mono-, di-, and trimethylated at Lys-36 by EEF1AKMT4; trimethylated form is predominant. Methylation by EEF1AKMT4 contributes to the fine-tuning of translation rates for a subset of tRNAs. Trimethylated at Gly-2 by METTL13. Mono- and dimethylated at Lys-55 by METTL13; dimethylated form is predominant. Post-translationally, ubiquitinated at Lys-385 by RNF14 in response to ribosome collisions (ribosome stalling), leading to its degradation by the proteasome and rescue of stalled ribosomes.

The protein resides in the cytoplasm. It is found in the nucleus. It localises to the nucleolus. Its subcellular location is the cell membrane. The enzyme catalyses GTP + H2O = GDP + phosphate + H(+). In terms of biological role, translation elongation factor that catalyzes the GTP-dependent binding of aminoacyl-tRNA (aa-tRNA) to the A-site of ribosomes during the elongation phase of protein synthesis. Base pairing between the mRNA codon and the aa-tRNA anticodon promotes GTP hydrolysis, releasing the aa-tRNA from EEF1A1 and allowing its accommodation into the ribosome. The growing protein chain is subsequently transferred from the P-site peptidyl tRNA to the A-site aa-tRNA, extending it by one amino acid through ribosome-catalyzed peptide bond formation. Also plays a role in the positive regulation of IFNG transcription in T-helper 1 cells as part of an IFNG promoter-binding complex with TXK and PARP1. Also plays a role in cytoskeleton organization by promoting actin bundling. This chain is Elongation factor 1-alpha 1 (EEF1A1), found in Bos taurus (Bovine).